The following is a 246-amino-acid chain: Large ribosomal subunit protein uL3 (246 aa).

N5-methylglutamine is present on Q151.

This sequence belongs to the universal ribosomal protein uL3 family. In terms of assembly, part of the 50S ribosomal subunit. Forms a cluster with proteins L14 and L19. Post-translationally, methylated by PrmB.

In terms of biological role, one of the primary rRNA binding proteins, it binds directly near the 3'-end of the 23S rRNA, where it nucleates assembly of the 50S subunit. This chain is Large ribosomal subunit protein uL3, found in Bartonella henselae (strain ATCC 49882 / DSM 28221 / CCUG 30454 / Houston 1) (Rochalimaea henselae).